Reading from the N-terminus, the 243-residue chain is tRNA (guanine-N(1)-)-methyltransferase (243 aa).

S-adenosyl-L-methionine-binding positions include G108 and 127 to 132 (LGDFVL).

Belongs to the RNA methyltransferase TrmD family. As to quaternary structure, homodimer.

The protein resides in the cytoplasm. It catalyses the reaction guanosine(37) in tRNA + S-adenosyl-L-methionine = N(1)-methylguanosine(37) in tRNA + S-adenosyl-L-homocysteine + H(+). In terms of biological role, specifically methylates guanosine-37 in various tRNAs. The sequence is that of tRNA (guanine-N(1)-)-methyltransferase from Streptococcus pyogenes serotype M5 (strain Manfredo).